Here is a 695-residue protein sequence, read N- to C-terminus: Elongation factor G 2 (695 aa).

The tr-type G domain occupies 5–280 (SLYRNIGIFA…AVVDYLPSPT (276 aa)). Residues 14 to 21 (AHVDAGKT), 78 to 82 (DTPGH), and 132 to 135 (NKLD) contribute to the GTP site.

The protein belongs to the TRAFAC class translation factor GTPase superfamily. Classic translation factor GTPase family. EF-G/EF-2 subfamily.

It localises to the cytoplasm. Catalyzes the GTP-dependent ribosomal translocation step during translation elongation. During this step, the ribosome changes from the pre-translocational (PRE) to the post-translocational (POST) state as the newly formed A-site-bound peptidyl-tRNA and P-site-bound deacylated tRNA move to the P and E sites, respectively. Catalyzes the coordinated movement of the two tRNA molecules, the mRNA and conformational changes in the ribosome. This Vibrio cholerae serotype O1 (strain ATCC 39315 / El Tor Inaba N16961) protein is Elongation factor G 2.